The primary structure comprises 410 residues: Arginine deiminase (410 aa).

Cys-398 functions as the Amidino-cysteine intermediate in the catalytic mechanism.

This sequence belongs to the arginine deiminase family.

The protein resides in the cytoplasm. The catalysed reaction is L-arginine + H2O = L-citrulline + NH4(+). Its pathway is amino-acid degradation; L-arginine degradation via ADI pathway; carbamoyl phosphate from L-arginine: step 1/2. This chain is Arginine deiminase, found in Limosilactobacillus reuteri (strain DSM 20016) (Lactobacillus reuteri).